Here is a 906-residue protein sequence, read N- to C-terminus: MVSFGGLARKIFGSSNDRRVKTLRQRAEQITALEKNYENLTDEQLQAKTAEFRAALAEGKSLDSLLPDAFATAREAAKRVLGMRPFDVQLIGGMVLHERGIAEMRTGEGKTLMATLPVYLNALEGKGVHVVTVNDYLATRDAETMGRLYNFLGLTVGVIKHGLDDDERRAAYACDITYGTNNELGFDYLRDNMKYERAQMVQRPHNYAIVDEVDSILIDEARTPLIISGPLEDRSDFYNLIDTFIPPLAEEDYEVDEKQKTAIFTEVGTEKVEKLLEAAGHLKGESLYDIENVAVVHHLNNALRAHKLFQRDKDYIVRNDEIVIIDEFTGRMMPGRRYSEGLHQALEAKEHVTIQPENQTLASITFQNYFRMYNKLSGMTGTAATEAEEFGNIYGLEVLEIPTNLPVQRIDEDDEVYRTVEEKYRAIVRDIRASHEKGQPILVGTTSIEKSEQLAERLRREGIKGFQVLNARYHEQEAYIIAQAGVPGAVTIATNMAGRGTDIQLGGNLEMRVRQELSDVPEGPEREEKIAAIKADIAQLKEKALAAGGLYVLATERHESRRIDNQLRGRSGRQGDPGRSKFFLSLQDDLMRIFGSDRMDGMLQKLGLKEDEAIVHPWINKALEKAQKKVEARNFEIRKNLLKYDDVMNDQRKVIFEQRLEMMDEEDLTETVAEMRHEVIEDMVILRIPKDAYAEKWDIAGLKQDIASKLNLDLPVEEWAKEEGIAEEEFENRIKEAADKAAAEKAERFGPQIMTYVEKSVIMQSLDNLWREHLVNLDHLRSVVGFRGYAQRDPLNEYKTEAFELFQTMLANLREVVISQLMRVEIVGEAPPEPQLPPMAGLHIDGTTGENDFDEAIWAEHQHDDRIVPPAQRDPADPRTWGKVSRNEPCPCGSGKKYKHCHGAFE.

Residues Gln89, 107 to 111, and Asp502 contribute to the ATP site; that span reads GEGKT. 4 residues coordinate Zn(2+): Cys890, Cys892, Cys901, and His902.

This sequence belongs to the SecA family. In terms of assembly, monomer and homodimer. Part of the essential Sec protein translocation apparatus which comprises SecA, SecYEG and auxiliary proteins SecDF-YajC and YidC. Requires Zn(2+) as cofactor.

The protein resides in the cell inner membrane. It localises to the cytoplasm. It catalyses the reaction ATP + H2O + cellular proteinSide 1 = ADP + phosphate + cellular proteinSide 2.. In terms of biological role, part of the Sec protein translocase complex. Interacts with the SecYEG preprotein conducting channel. Has a central role in coupling the hydrolysis of ATP to the transfer of proteins into and across the cell membrane, serving both as a receptor for the preprotein-SecB complex and as an ATP-driven molecular motor driving the stepwise translocation of polypeptide chains across the membrane. This Brucella canis (strain ATCC 23365 / NCTC 10854 / RM-666) protein is Protein translocase subunit SecA.